We begin with the raw amino-acid sequence, 225 residues long: 3-dehydroquinate dehydratase (225 aa).

3-dehydroquinate contacts are provided by residues Ser6, 30–32, and Arg62; that span reads EWR. The active-site Proton donor/acceptor is His118. Lys143 serves as the catalytic Schiff-base intermediate with substrate. Arg186, Thr205, and Gln209 together coordinate 3-dehydroquinate.

This sequence belongs to the type-I 3-dehydroquinase family. In terms of assembly, homodimer.

The enzyme catalyses 3-dehydroquinate = 3-dehydroshikimate + H2O. It participates in metabolic intermediate biosynthesis; chorismate biosynthesis; chorismate from D-erythrose 4-phosphate and phosphoenolpyruvate: step 3/7. Involved in the third step of the chorismate pathway, which leads to the biosynthesis of aromatic amino acids. Catalyzes the cis-dehydration of 3-dehydroquinate (DHQ) and introduces the first double bond of the aromatic ring to yield 3-dehydroshikimate. The sequence is that of 3-dehydroquinate dehydratase from Streptococcus gordonii (strain Challis / ATCC 35105 / BCRC 15272 / CH1 / DL1 / V288).